The sequence spans 285 residues: Putative lipoprotein SCO4650 (285 aa).

Positions 1–20 (MTGTTARRTVVSVAVSAALA) are cleaved as a signal peptide. A lipid anchor (N-palmitoyl cysteine) is attached at C21. Residue C21 is the site of S-diacylglycerol cysteine attachment. The tract at residues 27–63 (GPGGSDDAGHSTGPTGSARPSASAPASSRAPALTGPS) is disordered. The span at 43–58 (SARPSASAPASSRAPA) shows a compositional bias: low complexity.

The protein resides in the cell membrane. The sequence is that of Putative lipoprotein SCO4650 from Streptomyces coelicolor (strain ATCC BAA-471 / A3(2) / M145).